A 478-amino-acid polypeptide reads, in one-letter code: Ribulose bisphosphate carboxylase large chain (478 aa).

The propeptide occupies 1–2 (MS). Position 3 is an N-acetylproline (P3). Residue K14 is modified to N6,N6,N6-trimethyllysine. Positions 123 and 173 each coordinate substrate. K175 (proton acceptor) is an active-site residue. K177 serves as a coordination point for substrate. Residues K201, D203, and E204 each coordinate Mg(2+). K201 carries the post-translational modification N6-carboxylysine. The Proton acceptor role is filled by H294. Residues R295, H327, and S379 each coordinate substrate.

This sequence belongs to the RuBisCO large chain family. Type I subfamily. Heterohexadecamer of 8 large chains and 8 small chains; disulfide-linked. The disulfide link is formed within the large subunit homodimers. The cofactor is Mg(2+). Post-translationally, the disulfide bond which can form in the large chain dimeric partners within the hexadecamer appears to be associated with oxidative stress and protein turnover.

It is found in the plastid. Its subcellular location is the chloroplast. It carries out the reaction 2 (2R)-3-phosphoglycerate + 2 H(+) = D-ribulose 1,5-bisphosphate + CO2 + H2O. The enzyme catalyses D-ribulose 1,5-bisphosphate + O2 = 2-phosphoglycolate + (2R)-3-phosphoglycerate + 2 H(+). RuBisCO catalyzes two reactions: the carboxylation of D-ribulose 1,5-bisphosphate, the primary event in carbon dioxide fixation, as well as the oxidative fragmentation of the pentose substrate in the photorespiration process. Both reactions occur simultaneously and in competition at the same active site. This Neurachne tenuifolia protein is Ribulose bisphosphate carboxylase large chain.